A 156-amino-acid chain; its full sequence is uncharacterized protein (156 aa).

The N-acetyltransferase domain occupies 11–156 (EEFRSYLTYT…ETDVVMSKKL (146 aa)).

The protein belongs to the acetyltransferase family. In terms of assembly, homodimer.

This is an uncharacterized protein from Bacillus subtilis (strain 168).